Here is a 165-residue protein sequence, read N- to C-terminus: Lymphocyte antigen 6K (165 aa).

An N-terminal signal peptide occupies residues 1–17; the sequence is MALLALLLVVALPRVWT. An N-linked (GlcNAc...) asparagine glycan is attached at Asn20. In terms of domain architecture, UPAR/Ly6 spans 47–141; it reads ERENTFECQN…VFKEYAGSMG (95 aa). A lipid anchor (GPI-anchor amidated glycine) is attached at Gly138. The propeptide at 139–165 is removed in mature form; that stretch reads SMGESCGGLWLAILLLLASIAAGLSLS.

In terms of assembly, interacts with TEX101. As to expression, specifically expressed in testis (at protein level).

It localises to the secreted. Its subcellular location is the cytoplasm. The protein resides in the cell membrane. It is found in the cytoplasmic vesicle. The protein localises to the secretory vesicle. It localises to the acrosome. Its subcellular location is the membrane raft. Its function is as follows. Required for sperm migration into the oviduct and male fertility by controlling binding of sperm to zona pellucida. May play a role in cell growth. The sequence is that of Lymphocyte antigen 6K from Homo sapiens (Human).